The primary structure comprises 477 residues: Histidine--tRNA ligase (477 aa).

The protein belongs to the class-II aminoacyl-tRNA synthetase family. In terms of assembly, homodimer.

It localises to the cytoplasm. The enzyme catalyses tRNA(His) + L-histidine + ATP = L-histidyl-tRNA(His) + AMP + diphosphate + H(+). The polypeptide is Histidine--tRNA ligase (Xanthomonas campestris pv. campestris (strain 8004)).